Consider the following 144-residue polypeptide: Grifin (144 aa).

Residues 5-133 (FEAFCAGGLA…EHRLAQVELA (129 aa)) enclose the Galectin domain. A Phosphoserine modification is found at S138.

In terms of assembly, homodimer.

This chain is Grifin (Grifin), found in Mus musculus (Mouse).